We begin with the raw amino-acid sequence, 174 residues long: Large ribosomal subunit protein uL10 (174 aa).

This sequence belongs to the universal ribosomal protein uL10 family. In terms of assembly, part of the ribosomal stalk of the 50S ribosomal subunit. The N-terminus interacts with L11 and the large rRNA to form the base of the stalk. The C-terminus forms an elongated spine to which L12 dimers bind in a sequential fashion forming a multimeric L10(L12)X complex.

In terms of biological role, forms part of the ribosomal stalk, playing a central role in the interaction of the ribosome with GTP-bound translation factors. The protein is Large ribosomal subunit protein uL10 of Desulfovibrio desulfuricans (strain ATCC 27774 / DSM 6949 / MB).